The following is a 34-amino-acid chain: Photosystem II reaction center protein M (34 aa).

Residues 5-25 (ILAFIATALFILIPTSFLLII) form a helical membrane-spanning segment.

The protein belongs to the PsbM family. PSII is composed of 1 copy each of membrane proteins PsbA, PsbB, PsbC, PsbD, PsbE, PsbF, PsbH, PsbI, PsbJ, PsbK, PsbL, PsbM, PsbT, PsbX, PsbY, PsbZ, Psb30/Ycf12, at least 3 peripheral proteins of the oxygen-evolving complex and a large number of cofactors. It forms dimeric complexes. Detected in both etioplasts and green leaves; PSII is only assembled in green leaves.

The protein resides in the plastid. It is found in the chloroplast thylakoid membrane. Its function is as follows. One of the components of the core complex of photosystem II (PSII). PSII is a light-driven water:plastoquinone oxidoreductase that uses light energy to abstract electrons from H(2)O, generating O(2) and a proton gradient subsequently used for ATP formation. It consists of a core antenna complex that captures photons, and an electron transfer chain that converts photonic excitation into a charge separation. This subunit is found at the monomer-monomer interface. This chain is Photosystem II reaction center protein M, found in Hordeum vulgare (Barley).